We begin with the raw amino-acid sequence, 205 residues long: Meiotic nuclear division protein 1 homolog (205 aa).

Residues 79–147 adopt a coiled-coil conformation; sequence LHARKRKLET…CADLEKYKEC (69 aa).

It belongs to the MND1 family.

The protein resides in the nucleus. Its function is as follows. Required for proper homologous chromosome pairing and efficient cross-over and intragenic recombination during meiosis. Stimulates both dmc1- and rad51-mediated homologous strand assimilation, which is required for the resolution of meiotic double-strand breaks. This chain is Meiotic nuclear division protein 1 homolog, found in Xenopus laevis (African clawed frog).